Here is a 1343-residue protein sequence, read N- to C-terminus: DNA-directed RNA polymerase subunit beta (1343 aa).

This sequence belongs to the RNA polymerase beta chain family. The RNAP catalytic core consists of 2 alpha, 1 beta, 1 beta' and 1 omega subunit. When a sigma factor is associated with the core the holoenzyme is formed, which can initiate transcription.

It carries out the reaction RNA(n) + a ribonucleoside 5'-triphosphate = RNA(n+1) + diphosphate. Functionally, DNA-dependent RNA polymerase catalyzes the transcription of DNA into RNA using the four ribonucleoside triphosphates as substrates. The protein is DNA-directed RNA polymerase subunit beta of Shewanella woodyi (strain ATCC 51908 / MS32).